The primary structure comprises 246 residues: Acetoacetate decarboxylase (246 aa).

The Schiff-base intermediate with acetoacetate role is filled by K116.

The protein belongs to the ADC family.

The catalysed reaction is acetoacetate + H(+) = acetone + CO2. In terms of biological role, catalyzes the conversion of acetoacetate to acetone and carbon dioxide. This chain is Acetoacetate decarboxylase, found in Burkholderia multivorans (strain ATCC 17616 / 249).